Reading from the N-terminus, the 246-residue chain is tRNA (guanine-N(1)-)-methyltransferase (246 aa).

S-adenosyl-L-methionine-binding positions include Gly-114 and 134 to 139 (IGDYIL).

The protein belongs to the RNA methyltransferase TrmD family. Homodimer.

It is found in the cytoplasm. The catalysed reaction is guanosine(37) in tRNA + S-adenosyl-L-methionine = N(1)-methylguanosine(37) in tRNA + S-adenosyl-L-homocysteine + H(+). In terms of biological role, specifically methylates guanosine-37 in various tRNAs. This Coxiella burnetii (strain RSA 331 / Henzerling II) protein is tRNA (guanine-N(1)-)-methyltransferase.